Here is a 444-residue protein sequence, read N- to C-terminus: Trigger factor (444 aa).

One can recognise a PPIase FKBP-type domain in the interval 160–245 (DMQVTFDFEG…VKQVEKPKLP (86 aa)).

This sequence belongs to the FKBP-type PPIase family. Tig subfamily.

The protein resides in the cytoplasm. The enzyme catalyses [protein]-peptidylproline (omega=180) = [protein]-peptidylproline (omega=0). Involved in protein export. Acts as a chaperone by maintaining the newly synthesized protein in an open conformation. Functions as a peptidyl-prolyl cis-trans isomerase. This chain is Trigger factor, found in Acinetobacter baumannii (strain SDF).